Reading from the N-terminus, the 252-residue chain is Type II secretion system protein N (252 aa).

Residues 1-4 are Cytoplasmic-facing; it reads MKNR. The helical transmembrane segment at 5-25 threads the bilayer; the sequence is LTIGLLLAAIYLFWLLLSAPA. Residues 26–252 are Periplasmic-facing; it reads RLLALTLSDD…QGEWLSEEKK (227 aa).

The protein belongs to the GSP N family.

The protein localises to the cell inner membrane. Its function is as follows. Involved in a type II secretion system (T2SS, formerly general secretion pathway, GSP) for the export of proteins. Required for the translocation of pullulanase. The protein is Type II secretion system protein N (pulN) of Klebsiella pneumoniae.